Reading from the N-terminus, the 200-residue chain is Imidazole glycerol phosphate synthase subunit HisH (200 aa).

Residues 3–200 form the Glutamine amidotransferase type-1 domain; it reads DVALIDAGGA…LHNFLEMSFP (198 aa). Cys-78 acts as the Nucleophile in catalysis. Catalysis depends on residues His-179 and Glu-181.

As to quaternary structure, heterodimer of HisH and HisF.

Its subcellular location is the cytoplasm. The catalysed reaction is 5-[(5-phospho-1-deoxy-D-ribulos-1-ylimino)methylamino]-1-(5-phospho-beta-D-ribosyl)imidazole-4-carboxamide + L-glutamine = D-erythro-1-(imidazol-4-yl)glycerol 3-phosphate + 5-amino-1-(5-phospho-beta-D-ribosyl)imidazole-4-carboxamide + L-glutamate + H(+). It catalyses the reaction L-glutamine + H2O = L-glutamate + NH4(+). It participates in amino-acid biosynthesis; L-histidine biosynthesis; L-histidine from 5-phospho-alpha-D-ribose 1-diphosphate: step 5/9. IGPS catalyzes the conversion of PRFAR and glutamine to IGP, AICAR and glutamate. The HisH subunit catalyzes the hydrolysis of glutamine to glutamate and ammonia as part of the synthesis of IGP and AICAR. The resulting ammonia molecule is channeled to the active site of HisF. The protein is Imidazole glycerol phosphate synthase subunit HisH of Xanthomonas oryzae pv. oryzae (strain MAFF 311018).